A 215-amino-acid polypeptide reads, in one-letter code: Cytidylate kinase (215 aa).

11 to 19 contacts ATP; that stretch reads GPTASGKGT.

This sequence belongs to the cytidylate kinase family. Type 1 subfamily.

Its subcellular location is the cytoplasm. The enzyme catalyses CMP + ATP = CDP + ADP. It carries out the reaction dCMP + ATP = dCDP + ADP. This is Cytidylate kinase from Polynucleobacter necessarius subsp. necessarius (strain STIR1).